The following is an 815-amino-acid chain: Cilia- and flagella-associated protein 251 (815 aa).

WD repeat units lie at residues Gly58 to Thr99, Pro103 to Glu148, Pro166 to Gln205, Gln218 to Gly257, Ile271 to Phe308, Ser379 to Gly418, Ala420 to Val460, Asn463 to Arg502, Ser511 to Gly553, and Ser573 to Ser612.

In terms of assembly, identified in a spoke-associated complex containing CFAP61, CFAP91 and CFAP251; the complex is associated with the radial spokes in the axoneme. The complex associates with Calmodulin; the association is calcium sensitive.

The protein resides in the cytoplasm. It localises to the cytoskeleton. Its subcellular location is the flagellum axoneme. Functionally, as component of a spoke-associated complex, regulates flagellar dynein activity by mediating regulatory signals between the radial spokes and dynein arms. The polypeptide is Cilia- and flagella-associated protein 251 (Chlamydomonas reinhardtii (Chlamydomonas smithii)).